Consider the following 273-residue polypeptide: WIMGHMVNAVYQIDEFVNLGANSIETDVSFDDNANPEYTYHGIPCDCGRSCLKWENCNDFLKGLRSATTPGNSKYQSKLILVVFDLKTGSLYDNQASEAGKKLAKNLLKHYWNNGNNGGRAYIVLSIPDLNHYPLIKGFTDTLKQEGHPELLEKVGYDFSGNDAVGDVAKAYKKAGVSGHVWQSDGITNCLLRGLTRVKEAVANRDSGNGYINKVYYWTVDKRATTRDALDAGVDGVMTNYPDVIADVMNEAAYKNKVRLATYEDSPWVTFKK.

H5 is an active-site residue. Residues E25 and D27 each coordinate Mg(2+). Residue H41 is the Nucleophile of the active site. Intrachain disulfides connect C45–C51 and C47–C190. D85 contacts Mg(2+).

Belongs to the arthropod phospholipase D family. Class II subfamily. The cofactor is Mg(2+). In terms of tissue distribution, expressed by the venom gland.

The protein resides in the secreted. The enzyme catalyses an N-(acyl)-sphingosylphosphocholine = an N-(acyl)-sphingosyl-1,3-cyclic phosphate + choline. It catalyses the reaction an N-(acyl)-sphingosylphosphoethanolamine = an N-(acyl)-sphingosyl-1,3-cyclic phosphate + ethanolamine. The catalysed reaction is a 1-acyl-sn-glycero-3-phosphocholine = a 1-acyl-sn-glycero-2,3-cyclic phosphate + choline. It carries out the reaction a 1-acyl-sn-glycero-3-phosphoethanolamine = a 1-acyl-sn-glycero-2,3-cyclic phosphate + ethanolamine. In terms of biological role, dermonecrotic toxins cleave the phosphodiester linkage between the phosphate and headgroup of certain phospholipids (sphingolipid and lysolipid substrates), forming an alcohol (often choline) and a cyclic phosphate. This toxin acts on sphingomyelin (SM). It may also act on ceramide phosphoethanolamine (CPE), lysophosphatidylcholine (LPC) and lysophosphatidylethanolamine (LPE), but not on lysophosphatidylserine (LPS), and lysophosphatidylglycerol (LPG). It acts by transphosphatidylation, releasing exclusively cyclic phosphate products as second products. Induces dermonecrosis, hemolysis, increased vascular permeability, edema, inflammatory response, and platelet aggregation. This chain is Dermonecrotic toxin LhSicTox-alphaIA2aviii, found in Loxosceles hirsuta (Recluse spider).